A 1212-amino-acid polypeptide reads, in one-letter code: uncharacterized protein (1212 aa).

Positions 783–802 (TRQDASGGSSSGTKKGEKLQ) are disordered.

This is an uncharacterized protein from Human herpesvirus 6B (strain Z29) (HHV-6 variant B).